The sequence spans 233 residues: Uracil-DNA glycosylase (233 aa).

The active-site Proton acceptor is the Asp70.

Belongs to the uracil-DNA glycosylase (UDG) superfamily. UNG family.

It localises to the cytoplasm. It catalyses the reaction Hydrolyzes single-stranded DNA or mismatched double-stranded DNA and polynucleotides, releasing free uracil.. Functionally, excises uracil residues from the DNA which can arise as a result of misincorporation of dUMP residues by DNA polymerase or due to deamination of cytosine. The sequence is that of Uracil-DNA glycosylase from Helicobacter pylori (strain G27).